Here is a 655-residue protein sequence, read N- to C-terminus: Inactive serine protease scarface (655 aa).

The N-terminal stretch at 1–24 (MSASHFREQLALCITLAVLAAASG) is a signal peptide. 2 stretches are compositionally biased toward polar residues: residues 213–225 (TQAP…TTAV) and 237–252 (PSTT…QTSR). The segment at 213 to 319 (TQAPFRPQPT…QPSNQKPIYR (107 aa)) is disordered. Residues 343–407 (KCASALVCTS…PNYVDPWPVN (65 aa)) form a CLIP region. 7 disulfide bridges follow: Cys344/Cys394, Cys350/Cys383, Cys356/Cys395, Cys450/Cys466, Cys547/Cys605, Cys579/Cys587, and Cys595/Cys623. Residues 421–644 (PTGVKDLDAN…DIKWINTAFA (224 aa)) form the Peptidase S1 domain.

The protein belongs to the peptidase S1 family.

The protein localises to the secreted. Functionally, inactive serine protease that plays a role in germ-band retraction and dorsal closure morphogenesis in embryogenesis; contributes to amnioserosa attachment and epithelial apico-basal polarity by regulating the localization of laminin LanA on the apical side of the amnioserosa epithelium. Contributes to epithelial morphogenesis probably by regulating the bsk/JNK pathway, as part of a negative-feedback loop, and by modulating the cross-talk between the Egfr, bsk/JNK and dpp signal transduction pathways. In larval development, antagonizes the morphogenetic movements controlled by the bsk/JNK signaling including male genitalia formation and thorax development. The chain is Inactive serine protease scarface from Drosophila melanogaster (Fruit fly).